An 85-amino-acid chain; its full sequence is Toxin BmKa1 (85 aa).

An N-terminal signal peptide occupies residues 1–19; that stretch reads MNYLVFFSLALLLMTGVGS. Residues 21–83 enclose the LCN-type CS-alpha/beta domain; the sequence is RDGYIADDKN…VPIRVPGKCN (63 aa). 4 cysteine pairs are disulfide-bonded: C31–C82, C35–C55, C41–C65, and C45–C67.

The protein belongs to the long (4 C-C) scorpion toxin superfamily. Sodium channel inhibitor family. Alpha subfamily. In terms of tissue distribution, expressed by the venom gland.

The protein resides in the secreted. In terms of biological role, alpha toxins bind voltage-independently at site-3 of sodium channels (Nav) and inhibit the inactivation of the activated channels, thereby blocking neuronal transmission. The sequence is that of Toxin BmKa1 from Olivierus martensii (Manchurian scorpion).